A 65-amino-acid chain; its full sequence is Large ribosomal subunit protein bL35 (65 aa).

The segment at 1–30 is disordered; that stretch reads MPKMKTNRGAAKRFRKTASGRFKSKQSHLR. Basic residues predominate over residues 10 to 30; sequence AAKRFRKTASGRFKSKQSHLR.

This sequence belongs to the bacterial ribosomal protein bL35 family.

The protein is Large ribosomal subunit protein bL35 of Pseudoalteromonas atlantica (strain T6c / ATCC BAA-1087).